A 1779-amino-acid polypeptide reads, in one-letter code: 6-methylsalicylic acid synthase (1779 aa).

Over residues 1–11 (MSASRSSTKFS) the composition is skewed to polar residues. The disordered stretch occupies residues 1-40 (MSASRSSTKFSTPAEGSDNGKEFTTPATSTEGHEVPDRPG). The span at 31–40 (EGHEVPDRPG) shows a compositional bias: basic and acidic residues. Positions 43–472 (LADVAIIGMA…GTVSHAVLEA (430 aa)) constitute a Ketosynthase family 3 (KS3) domain. Active-site for beta-ketoacyl synthase activity residues include Cys-215, His-350, and His-392. A malonyl-CoA:ACP transacylase (MAT) domain region spans residues 586 to 883 (WIFSGHGAQW…TPTMVRRQPA (298 aa)). Ser-672 acts as the For acyl/malonyl transferase activity in catalysis. The interval 942–1218 (THDPAANNLL…SFAGLEGESF (277 aa)) is product template (PT) domain. The segment at 948–1064 (NNLLGKRIAL…AAVGAANVVP (117 aa)) is N-terminal hotdog fold. The PKS/mFAS DH domain maps to 948 to 1219 (NNLLGKRIAL…FAGLEGESFS (272 aa)). Residue His-980 is the Proton acceptor; for dehydratase activity of the active site. The C-terminal hotdog fold stretch occupies residues 1079–1219 (PQKLADSFSI…FAGLEGESFS (141 aa)). Asp-1138 (proton donor; for dehydratase activity) is an active-site residue. The region spanning 1703-1777 (QHLRDVINGC…HLVKHFTKEL (75 aa)) is the Carrier domain. Ser-1737 bears the O-(pantetheine 4'-phosphoryl)serine mark.

The enzyme catalyses 3 malonyl-CoA + acetyl-CoA + NADPH + 3 H(+) = 6-methylsalicylate + 3 CO2 + NADP(+) + 4 CoA + H2O. It functions in the pathway secondary metabolite biosynthesis; terpenoid biosynthesis. In terms of biological role, non-reducing polyketide synthase; part of the gene cluster that mediates the biosynthesis of yanuthone D, a fungal isoprenoid epoxycyclohexenone that acts as an antibiotic against fungi and bacteria. The first step of the pathway is the synthesis of 6-methylsalicylic acid (6-MSA) by the polyketide synthase yanA. 6-MSA is then converted to m-cresol by the decarboxylase yanB. The cytochrome P450 monooxygenase yanC then catalyzes the oxidation of m-cresol to toluquinol. Epoxidation of toluquinol is then performed by the short chain dehydrogenase yanD, with the help of yanE, and a further prenylation by yanG leads to 7-deacetoxyyanuthone A. The next step is the hydroxylation of C-22 of 7-deacetoxyyanuthone A by the cytochrome P450 monooxygenase yanH to yield 22-deacetylyanuthone A. O-Mevalon transferase yanI then attaches mevalon to the hydroxyl group of 22-deacetylyanuthone A to produce yanuthone E. Finally, the FAD-dependent monooxygenase yanF oxidizes the hydroxyl group at C15 of yanuthone E to form yanuthone D. Furthermore, several branching points in the pathway lead to the production of yanuthones F and G from 7-deacetoxyyanuthone A; yanuthones H and I from 22-deacetylyanuthone A; and yanuthone J from yanuthone E. This is 6-methylsalicylic acid synthase from Aspergillus niger (strain ATCC 1015 / CBS 113.46 / FGSC A1144 / LSHB Ac4 / NCTC 3858a / NRRL 328 / USDA 3528.7).